The chain runs to 201 residues: Akirin-2 (201 aa).

Serine 18 and serine 21 each carry phosphoserine. Positions 22–27 (PKRRRC) match the Nuclear localization signal motif. Serine 55 carries the post-translational modification Phosphoserine. An SYVS motif motif is present at residues 198–201 (SYVS).

It belongs to the akirin family. Homodimer. Interacts with IPO9; the interaction is direct. Associates with 20S and 26S proteasomes. Interacts with SMARCD1; promoting SWI/SNF complex recruitment. Interacts with NFKBIZ. Interacts with YWHAB. Polyubiquitinated. Polyubiquitination is dependent of UBR5 that extends pre-ubiquitinated AKIRIN2. As to expression, highly expressed in testis, cerebrum and cerebellum, and barely detectable in liver, heart, spleen and muscle. Also highly expressed in various tumor cells from hepatoma, glioblastoma and pheochromocytoma.

The protein localises to the nucleus. It is found in the cytoplasm. It localises to the membrane. Its function is as follows. Molecular adapter that acts as a bridge between a variety of multiprotein complexes, and which is involved in embryonic development, immunity, myogenesis and brain development. Plays a key role in nuclear protein degradation by promoting import of proteasomes into the nucleus: directly binds to fully assembled 20S proteasomes at one end and to nuclear import receptor IPO9 at the other end, bridging them together and mediating the import of pre-assembled proteasome complexes through the nuclear pore. Involved in innate immunity by regulating the production of interleukin-6 (IL6) downstream of Toll-like receptor (TLR): acts by bridging the NF-kappa-B inhibitor NFKBIZ and the SWI/SNF complex, leading to promote induction of IL6. Also involved in adaptive immunity by promoting B-cell activation. Involved in brain development: required for the survival and proliferation of cerebral cortical progenitor cells. Involved in myogenesis: required for skeletal muscle formation and skeletal development, possibly by regulating expression of muscle differentiation factors. Also plays a role in facilitating interdigital tissue regression during limb development. The chain is Akirin-2 from Rattus norvegicus (Rat).